We begin with the raw amino-acid sequence, 578 residues long: Peptidyl-prolyl cis-trans isomerase-like 2 (578 aa).

The U-box domain maps to 40–114; the sequence is RRLPFNFCAA…SDSLGAGLSD (75 aa). A disordered region spans residues 240 to 260; sequence KAREQGGDVNRSSTALTKPTG. Residues 321–475 enclose the PPIase cyclophilin-type domain; the sequence is ATGFARMETN…NKILIKDIVI (155 aa). The disordered stretch occupies residues 505–578; the sequence is GTDDDKTTWT…GGGFGNFDNW (74 aa). Over residues 538–548 the composition is skewed to polar residues; the sequence is KTTTQQSTPTV. Residues 551-560 are compositionally biased toward acidic residues; the sequence is ADLEDVDTWE. The segment covering 569–578 has biased composition (gly residues); it reads GGGFGNFDNW.

Belongs to the cyclophilin-type PPIase family. PPIL2 subfamily.

It localises to the nucleus. It carries out the reaction [protein]-peptidylproline (omega=180) = [protein]-peptidylproline (omega=0). It catalyses the reaction S-ubiquitinyl-[E2 ubiquitin-conjugating enzyme]-L-cysteine + [acceptor protein]-L-lysine = [E2 ubiquitin-conjugating enzyme]-L-cysteine + N(6)-ubiquitinyl-[acceptor protein]-L-lysine.. It participates in protein modification; protein ubiquitination. Its function is as follows. May catalyze the cis-trans isomerization of proline imidic peptide bonds in oligopeptides thereby assisting the folding of proteins. May also function as a chaperone, playing a role in intracellular transport of proteins. May also have a protein ubiquitin ligase activity acting as an E3 ubiquitin protein ligase or as a ubiquitin-ubiquitin ligase promoting elongation of ubiquitin chains on proteins. The sequence is that of Peptidyl-prolyl cis-trans isomerase-like 2 (CYP8) from Gibberella zeae (strain ATCC MYA-4620 / CBS 123657 / FGSC 9075 / NRRL 31084 / PH-1) (Wheat head blight fungus).